Reading from the N-terminus, the 661-residue chain is Fusaric acid cluster transcription factor FUB12 (661 aa).

The segment at residues 17–48 (CVPCRTRKIKCNAAVVGLPCGSCVSRECPDEC) is a DNA-binding region (zn(2)-C6 fungal-type). Disordered stretches follow at residues 57 to 131 (TVKG…RPPG) and 151 to 185 (SAAQTDASDHQSNDEPDDSFNSQIHHWNPPPQLDD). Over residues 73–98 (PDTNGSILSPRQQQLPTNVSRQTTDS) the composition is skewed to polar residues. Residues 99 to 109 (SHSDPVEESIH) show a composition bias toward basic and acidic residues. Positions 110-119 (ASHTGSSLRN) are enriched in polar residues. Over residues 120 to 129 (DTPHSRDRRP) the composition is skewed to basic and acidic residues.

Its subcellular location is the nucleus. Functionally, transcription factor that is involved in the formation of the two Fusaric acid derivatives, dehydrofusaric acid and fusarinolic acid, serving as a detoxification mechanism. In Gibberella fujikuroi (strain CBS 195.34 / IMI 58289 / NRRL A-6831) (Bakanae and foot rot disease fungus), this protein is Fusaric acid cluster transcription factor FUB12.